The sequence spans 811 residues: Methionine--tRNA ligase (811 aa).

The short motif at 11-21 (PYVNNVPHLGN) is the 'HIGH' region element. Zn(2+) contacts are provided by Cys-142, Cys-145, Cys-155, and Cys-158. Positions 344–348 (KFSKS) match the 'KMSKS' region motif. Lys-347 contacts ATP. Positions 606 to 640 (GVSVPRTAQMPTGMNKKETDAQQKKEEREMPPPSD) are disordered. Over residues 620–635 (NKKETDAQQKKEEREM) the composition is skewed to basic and acidic residues. Positions 648–753 (FSERVVLKVA…PWALPGERAT (106 aa)) constitute a tRNA-binding domain.

It belongs to the class-I aminoacyl-tRNA synthetase family. MetG type 1 subfamily. Homodimer. It depends on Zn(2+) as a cofactor.

The protein localises to the cytoplasm. The enzyme catalyses tRNA(Met) + L-methionine + ATP = L-methionyl-tRNA(Met) + AMP + diphosphate. Is required not only for elongation of protein synthesis but also for the initiation of all mRNA translation through initiator tRNA(fMet) aminoacylation. The chain is Methionine--tRNA ligase from Treponema pallidum (strain Nichols).